The following is a 633-amino-acid chain: Probable potassium transport system protein Kup 3 (633 aa).

12 helical membrane-spanning segments follow: residues 24-44, 61-81, 114-134, 148-168, 180-200, 222-242, 258-278, 298-318, 348-368, 377-397, 405-425, and 427-447; these read LVLA…LYAF, VLGI…LKYV, LVLG…TPAI, PALS…LFFV, FGPV…IHIF, IGSA…AEAL, WFSL…AFVL, IPMV…VISG, IFMP…VLFF, AYGI…FIVM, LTAA…FLAA, and IAKF…MALI.

It belongs to the HAK/KUP transporter (TC 2.A.72) family.

It localises to the cell inner membrane. The catalysed reaction is K(+)(in) + H(+)(in) = K(+)(out) + H(+)(out). Functionally, transport of potassium into the cell. Likely operates as a K(+):H(+) symporter. The sequence is that of Probable potassium transport system protein Kup 3 from Rhizobium johnstonii (strain DSM 114642 / LMG 32736 / 3841) (Rhizobium leguminosarum bv. viciae).